The following is a 330-amino-acid chain: Tryptophan--tRNA ligase (330 aa).

Residues 10 to 12 (QAT) and 18 to 19 (GN) contribute to the ATP site. The 'HIGH' region motif lies at 11–19 (ATGSLHLGN). Residue Asp134 participates in L-tryptophan binding. ATP is bound by residues 146 to 148 (GED), Ile186, and 195 to 199 (KMSKS). A 'KMSKS' region motif is present at residues 195-199 (KMSKS).

This sequence belongs to the class-I aminoacyl-tRNA synthetase family. As to quaternary structure, homodimer.

The protein localises to the cytoplasm. The enzyme catalyses tRNA(Trp) + L-tryptophan + ATP = L-tryptophyl-tRNA(Trp) + AMP + diphosphate + H(+). In terms of biological role, catalyzes the attachment of tryptophan to tRNA(Trp). The polypeptide is Tryptophan--tRNA ligase (Rickettsia felis (strain ATCC VR-1525 / URRWXCal2) (Rickettsia azadi)).